Reading from the N-terminus, the 598-residue chain is Trichothecene efflux pump TRI12 (598 aa).

A helical membrane pass occupies residues 42–62 (IVASFAAFSMNVVATYFVLQA). Residue N79 is glycosylated (N-linked (GlcNAc...) asparagine). Helical transmembrane passes span 109–129 (PFVI…CTAT) and 135–155 (LAAM…PLFI). N-linked (GlcNAc...) asparagine glycosylation is present at N161. 10 helical membrane passes run 165-185 (FLGL…SPYL), 197-217 (WIFY…IIWY), 241-261 (WIGI…VSWG), 273-293 (VIGL…YEVY), 312-332 (FVCI…LVIM), 356-376 (ATAS…FHLV), 381-401 (WQIL…SSIN), 409-429 (IALS…TMLL), 442-462 (AFAV…AAFI), and 533-553 (ANVY…SLCM). Residues 579 to 598 (LEGNSESQPSPIILSMADKE) are disordered.

It belongs to the major facilitator superfamily.

Its subcellular location is the cell membrane. Its function is as follows. Efflux pump that provides the dual role of trichothecene export and self-protection by allowing the fungus to evade the harmful effect of its own trichothecene production. The protein is Trichothecene efflux pump TRI12 of Fusarium sporotrichioides.